The primary structure comprises 201 residues: Potassium-transporting ATPase KdpC subunit (201 aa).

Residues 7–29 form a helical membrane-spanning segment; that stretch reads PALVLLTALTAITGLAYPLAMTG.

The protein belongs to the KdpC family. As to quaternary structure, the system is composed of three essential subunits: KdpA, KdpB and KdpC.

Its subcellular location is the cell inner membrane. Part of the high-affinity ATP-driven potassium transport (or Kdp) system, which catalyzes the hydrolysis of ATP coupled with the electrogenic transport of potassium into the cytoplasm. This subunit acts as a catalytic chaperone that increases the ATP-binding affinity of the ATP-hydrolyzing subunit KdpB by the formation of a transient KdpB/KdpC/ATP ternary complex. The chain is Potassium-transporting ATPase KdpC subunit from Methylorubrum populi (strain ATCC BAA-705 / NCIMB 13946 / BJ001) (Methylobacterium populi).